Consider the following 540-residue polypeptide: Light-independent protochlorophyllide reductase subunit B (540 aa).

Asp36 contacts [4Fe-4S] cluster. Catalysis depends on Asp292, which acts as the Proton donor. 428 to 429 is a binding site for substrate; sequence GL. The segment at 451–490 is disordered; it reads SNVASGVEPSTPSVSSEVSASSSASPEASAPTPSPDGDMV. A compositionally biased stretch (low complexity) spans 457–481; sequence VEPSTPSVSSEVSASSSASPEASAP.

The protein belongs to the ChlB/BchB/BchZ family. Protochlorophyllide reductase is composed of three subunits; BchL, BchN and BchB. Forms a heterotetramer of two BchB and two BchN subunits. [4Fe-4S] cluster serves as cofactor.

The enzyme catalyses chlorophyllide a + oxidized 2[4Fe-4S]-[ferredoxin] + 2 ADP + 2 phosphate = protochlorophyllide a + reduced 2[4Fe-4S]-[ferredoxin] + 2 ATP + 2 H2O. It functions in the pathway porphyrin-containing compound metabolism; bacteriochlorophyll biosynthesis (light-independent). Component of the dark-operative protochlorophyllide reductase (DPOR) that uses Mg-ATP and reduced ferredoxin to reduce ring D of protochlorophyllide (Pchlide) to form chlorophyllide a (Chlide). This reaction is light-independent. The NB-protein (BchN-BchB) is the catalytic component of the complex. This chain is Light-independent protochlorophyllide reductase subunit B, found in Chlorobium chlorochromatii (strain CaD3).